Consider the following 307-residue polypeptide: UPF0276 protein Bphyt_5128 (307 aa).

Belongs to the UPF0276 family.

The polypeptide is UPF0276 protein Bphyt_5128 (Paraburkholderia phytofirmans (strain DSM 17436 / LMG 22146 / PsJN) (Burkholderia phytofirmans)).